Consider the following 254-residue polypeptide: Phosphoglycerate mutase 1 (254 aa).

Substrate is bound by residues Arg-10 to Asn-17 and Ser-23 to Gly-24. His-11 serves as the catalytic Tele-phosphohistidine intermediate. Residues Ser-14 and Ser-23 each carry the phosphoserine modification. Tyr-26 bears the Phosphotyrosine mark. The residue at position 31 (Ser-31) is a Phosphoserine. Substrate is bound by residues Arg-62, Glu-89–Tyr-92, and Lys-100. Catalysis depends on Glu-89, which acts as the Proton donor/acceptor. N6-acetyllysine is present on Lys-106. Arg-116–Arg-117 provides a ligand contact to substrate. Ser-118 carries the post-translational modification Phosphoserine. Gly-187 to Asn-188 contributes to the substrate binding site. Lys-251 is modified (N6-acetyllysine; alternate). Lys-251 is modified (N6-succinyllysine; alternate). Lys-253 and Lys-254 each carry N6-acetyllysine.

It belongs to the phosphoglycerate mutase family. BPG-dependent PGAM subfamily. In terms of assembly, homodimer. In terms of processing, acetylated at Lys-253, Lys-253 and Lys-254 under high glucose condition. Acetylation increases catalytic activity. Under glucose restriction SIRT1 levels dramatically increase and it deacetylates the enzyme. In terms of tissue distribution, expressed in the liver and brain. Not found in the muscle.

The catalysed reaction is (2R)-2-phosphoglycerate = (2R)-3-phosphoglycerate. The enzyme catalyses (2R)-3-phospho-glyceroyl phosphate = (2R)-2,3-bisphosphoglycerate + H(+). Its function is as follows. Catalyzes the interconversion of 2-phosphoglycerate and 3-phosphoglyceratea crucial step in glycolysis, by using 2,3-bisphosphoglycerate. Also catalyzes the interconversion of (2R)-2,3-bisphosphoglycerate and (2R)-3-phospho-glyceroyl phosphate. This is Phosphoglycerate mutase 1 from Homo sapiens (Human).